The chain runs to 447 residues: Guanine nucleotide-binding protein alpha-1 subunit (447 aa).

Glycine 2 carries the N-myristoyl glycine lipid modification. A lipid anchor (S-palmitoyl cysteine) is attached at cysteine 3. Residues 40–447 enclose the G-alpha domain; the sequence is NEVKLLLLGA…QQNLKKSGIL (408 aa). Positions 43-56 are G1 motif; sequence KLLLLGAGESGKST. Glutamate 51, serine 52, glycine 53, lysine 54, serine 55, threonine 56, leucine 269, threonine 275, glycine 297, asparagine 363, lysine 364, aspartate 366, and alanine 419 together coordinate GTP. Serine 55 is a Mg(2+) binding site. Positions 267 to 275 are G2 motif; the sequence is DILKGRIKT. A Mg(2+)-binding site is contributed by threonine 275. Residues 290 to 299 are G3 motif; that stretch reads FKVYDAGGQR. The segment at 359 to 366 is G4 motif; the sequence is ILFLNKVD. The tract at residues 417-422 is G5 motif; that stretch reads TCATDT.

It belongs to the G-alpha family. G proteins are composed of 3 units; alpha, beta and gamma. The alpha chain contains the guanine nucleotide binding site. Mg(2+) serves as cofactor.

Functionally, guanine nucleotide-binding proteins (G proteins) are involved as modulators or transducers in various transmembrane signaling systems. This protein is involved in the mating response pathway. The chain is Guanine nucleotide-binding protein alpha-1 subunit (GPA1) from Kluyveromyces lactis (strain ATCC 8585 / CBS 2359 / DSM 70799 / NBRC 1267 / NRRL Y-1140 / WM37) (Yeast).